The primary structure comprises 182 residues: Translation initiation factor IF-3 (182 aa).

Belongs to the IF-3 family. Monomer.

It is found in the cytoplasm. IF-3 binds to the 30S ribosomal subunit and shifts the equilibrium between 70S ribosomes and their 50S and 30S subunits in favor of the free subunits, thus enhancing the availability of 30S subunits on which protein synthesis initiation begins. The sequence is that of Translation initiation factor IF-3 from Tropheryma whipplei (strain TW08/27) (Whipple's bacillus).